A 508-amino-acid polypeptide reads, in one-letter code: Photosystem II CP47 reaction center protein (508 aa).

6 helical membrane passes run 21-36, 101-115, 140-156, 203-218, 237-252, and 457-472; these read SVHL…WAGS, IVLS…IWHW, GIHL…FGAF, IAAG…FHLT, VLSS…AFVV, and CFAL…HGAR.

It belongs to the PsbB/PsbC family. PsbB subfamily. PSII is composed of 1 copy each of membrane proteins PsbA, PsbB, PsbC, PsbD, PsbE, PsbF, PsbH, PsbI, PsbJ, PsbK, PsbL, PsbM, PsbT, PsbX, PsbY, PsbZ, Psb30/Ycf12, at least 3 peripheral proteins of the oxygen-evolving complex and a large number of cofactors. It forms dimeric complexes. The cofactor is Binds multiple chlorophylls. PSII binds additional chlorophylls, carotenoids and specific lipids..

The protein localises to the plastid. It is found in the chloroplast thylakoid membrane. One of the components of the core complex of photosystem II (PSII). It binds chlorophyll and helps catalyze the primary light-induced photochemical processes of PSII. PSII is a light-driven water:plastoquinone oxidoreductase, using light energy to abstract electrons from H(2)O, generating O(2) and a proton gradient subsequently used for ATP formation. The sequence is that of Photosystem II CP47 reaction center protein from Chlorokybus atmophyticus (Soil alga).